The sequence spans 319 residues: Cell division protein FtsQ (319 aa).

The interval 1-53 (MDSREDMVPDVLLEAPNPRRRQSADTSTERPTRPARREQGYARVTPRGERMGN) is disordered. At 1-70 (MDSREDMVPD…PDFFAWFDPR (70 aa)) the chain is on the cytoplasmic side. Over residues 27–52 (STERPTRPARREQGYARVTPRGERMG) the composition is skewed to basic and acidic residues. A helical transmembrane segment spans residues 71–87 (WLWVPLMVCLAVGGYWA). Residues 88-319 (YEPLEKLLER…NATRNAPTHP (232 aa)) are Periplasmic-facing. The POTRA domain occupies 97–166 (RPFKSVVVEG…DTLVVKIAEQ (70 aa)).

Belongs to the FtsQ/DivIB family. FtsQ subfamily. Part of a complex composed of FtsB, FtsL and FtsQ.

The protein localises to the cell inner membrane. Its function is as follows. Essential cell division protein. May link together the upstream cell division proteins, which are predominantly cytoplasmic, with the downstream cell division proteins, which are predominantly periplasmic. May control correct divisome assembly. The protein is Cell division protein FtsQ of Cellvibrio japonicus (strain Ueda107) (Pseudomonas fluorescens subsp. cellulosa).